The following is a 418-amino-acid chain: Sterigmatocystin 8-O-methyltransferase (418 aa).

Residues 1–41 constitute a propeptide that is removed on maturation; sequence MALPSKAALVGLANTLSEQVKRYLATAGETKSPEDHKLCIE. 170-176 contributes to the substrate binding site; the sequence is MRSGASF. The tract at residues 206 to 225 is substrate binding; it reads LFDYYSTVDEVRGRRFDLGM. Residues 254 to 255, Asp-277, 297 to 298, and Arg-313 each bind S-adenosyl-L-methionine; these read GG and DI. His-317 serves as the catalytic Proton acceptor.

Belongs to the class I-like SAM-binding methyltransferase superfamily. Cation-independent O-methyltransferase family. COMT subfamily.

It is found in the cytoplasm. It localises to the vacuole. It carries out the reaction sterigmatocystin + S-adenosyl-L-methionine = 8-O-methylsterigmatocystin + S-adenosyl-L-homocysteine + H(+). It catalyses the reaction dihydrosterigmatocystin + S-adenosyl-L-methionine = 8-O-methyldihydrosterigmatocystin + S-adenosyl-L-homocysteine + H(+). The protein operates within mycotoxin biosynthesis; aflatoxin biosynthesis. In terms of biological role, sterigmatocystin 8-O-methyltransferase; part of the gene cluster that mediates the biosynthesis of aflatoxins, a group of polyketide-derived furanocoumarins, and part of the most toxic and carcinogenic compounds among the known mycotoxins. The four major aflatoxins produced by A.parasiticus are aflatoxin B1 (AFB1), aflatoxin B2 (AFB2), aflatoxin G1 (AFG1) and aflatoxin G2 (AFG2). Within the aflatoxin pathway, the O-methyltransferase aflP uses both sterigmatocystin (ST) and dihydrosterigmatocystin (DHST) as substrates to yield O-methylsterigmatocystin (OMST) and dihydro-O-methylsterigmatocystin (DHOMST), respectively. The biosynthesis of aflatoxins begins with the norsolorinic acid synthase aflC that combines a hexanoyl starter unit produced by the fatty acid synthase aflA/aflB and 7 malonyl-CoA extender units to synthesize the precursor NOR. The second step is the conversion of NOR to averantin and requires the norsolorinic acid ketoreductase aflD, which catalyzes the dehydration of norsolorinic acid to form (1'S)-averantin. The norsolorinic acid reductases aflE and aflF may also play a role in the conversion of NOR to AVN. The cytochrome P450 monooxygenase aflG then catalyzes the hydroxylation of AVN to 5'hydroxyaverantin (HAVN). The next step is performed by the 5'-hydroxyaverantin dehydrogenase aflH that transforms HAVN to 5'-oxoaverantin (OAVN) which is further converted to averufin (AVF) by aflK that plays a dual role in the pathway, as a 5'-oxoaverantin cyclase that mediates conversion of 5'-oxoaverantin, as well as a versicolorin B synthase in a later step in the pathway. The averufin oxidase aflI catalyzes the conversion of AVF to versiconal hemiacetal acetate (VHA). VHA is then the substrate for the versiconal hemiacetal acetate esterase aflJ to yield versiconal (VAL). Versicolorin B synthase aflK then converts VAL to versicolorin B (VERB) by closing the bisfuran ring of aflatoxin which is required for DNA-binding, thus giving to aflatoxin its activity as a mutagen. Then, the activity of the versicolorin B desaturase aflL leads to versicolorin A (VERA). A branch point starts from VERB since it can also be converted to dihydrodemethylsterigmatocystin (DMDHST), probably also by aflL, VERA being a precursor for aflatoxins B1 and G1, and DMDHST for aflatoxins B2 and G2. Next, the versicolorin reductase aflM and the cytochrome P450 monooxygenase aflN are involved in conversion of VERA to demethylsterigmatocystin (DMST). AflX and aflY seem also involved in this step, through probable aflX-mediated epoxide ring-opening step following versicolorin A oxidation and aflY-mediated Baeyer-Villiger oxidation required for the formation of the xanthone ring. The methyltransferase aflO then leads to the modification of DMST to sterigmatocystin (ST), and of DMDHST to dihydrosterigmatocystin (DHST). Both ST and DHST are then substrates of the O-methyltransferase aflP to yield O-methylsterigmatocystin (OMST) and dihydro-O-methylsterigmatocystin (DHOMST), respectively. Finally OMST is converted to aflatoxins B1 and G1, and DHOMST to aflatoxins B2 and G2, via the action of several enzymes including O-methylsterigmatocystin oxidoreductase aflQ, the cytochrome P450 monooxygenase aflU, but also the NADH-dependent flavin oxidoreductase nadA which is specifically required for the synthesis of AFG1. This is Sterigmatocystin 8-O-methyltransferase from Aspergillus parasiticus (strain ATCC 56775 / NRRL 5862 / SRRC 143 / SU-1).